Reading from the N-terminus, the 79-residue chain is MAQQRRGGFKRRKKVDFIAANKIEYVDYKDTELLSRFVSERGKILPRRVTGTSAKNQRKVTTAIKRARVMALMPYVNED.

Belongs to the bacterial ribosomal protein bS18 family. As to quaternary structure, part of the 30S ribosomal subunit. Forms a tight heterodimer with protein bS6.

Its function is as follows. Binds as a heterodimer with protein bS6 to the central domain of the 16S rRNA, where it helps stabilize the platform of the 30S subunit. This Streptococcus pyogenes serotype M5 (strain Manfredo) protein is Small ribosomal subunit protein bS18.